Consider the following 205-residue polypeptide: Golgi apparatus membrane protein TVP23 homolog B (205 aa).

Met1 is modified (N-acetylmethionine). Residues 1 to 21 are disordered; sequence MLQQDSNDDTEDVSLFDAEEE. 4 helical membrane-spanning segments follow: residues 34–53, 54–72, 126–146, and 152–172; these read PVAS…VYLL, CELL…ILLL, IFWL…FSAL, and KWLA…YGYI.

Belongs to the TVP23 family.

Its subcellular location is the membrane. In Pongo abelii (Sumatran orangutan), this protein is Golgi apparatus membrane protein TVP23 homolog B (TVP23B).